Reading from the N-terminus, the 288-residue chain is Fe-S cluster assembly protein dre2 (288 aa).

The N-terminal SAM-like domain stretch occupies residues 1–127; that stretch reads MSSSVLVLTS…LSRPNQVEAV (127 aa). The segment at 128-177 is linker; that stretch reads PIKLSNKNGQSASKNKILDFLKSDKENLISGDDDQELIDEDELLDESAHD. Positions 185, 196, 199, and 201 each coordinate [2Fe-2S] cluster. Residues 185–201 are fe-S binding site A; it reads CKPEPGKKKRACKNCTC. The [4Fe-4S] cluster site is built by Cys244, Cys247, Cys255, and Cys258. Short sequence motifs (cx2C motif) lie at residues 244–247 and 255–258; these read CGNC and CSGC. The fe-S binding site B stretch occupies residues 244–258; it reads CGNCYLGDAFRCSGC.

It belongs to the anamorsin family. Monomer. Interacts with tah18. Interacts with tim40. [2Fe-2S] cluster serves as cofactor. Requires [4Fe-4S] cluster as cofactor.

It is found in the cytoplasm. The protein localises to the mitochondrion intermembrane space. In terms of biological role, component of the cytosolic iron-sulfur (Fe-S) protein assembly (CIA) machinery required for the maturation of extramitochondrial Fe-S proteins. Part of an electron transfer chain functioning in an early step of cytosolic Fe-S biogenesis, facilitating the de novo assembly of a [4Fe-4S] cluster on the scaffold complex cfd1-nbp35. Electrons are transferred to dre2 from NADPH via the FAD- and FMN-containing protein tah18. Tah18-dre2 are also required for the assembly of the diferric tyrosyl radical cofactor of ribonucleotide reductase (RNR), probably by providing electrons for reduction during radical cofactor maturation in the catalytic small subunit suc22. This chain is Fe-S cluster assembly protein dre2, found in Schizosaccharomyces pombe (strain 972 / ATCC 24843) (Fission yeast).